A 455-amino-acid polypeptide reads, in one-letter code: UDP-N-acetylmuramoylalanine--D-glutamate ligase (455 aa).

Position 118 to 124 (118 to 124 (GTNGKST)) interacts with ATP.

It belongs to the MurCDEF family.

It is found in the cytoplasm. The enzyme catalyses UDP-N-acetyl-alpha-D-muramoyl-L-alanine + D-glutamate + ATP = UDP-N-acetyl-alpha-D-muramoyl-L-alanyl-D-glutamate + ADP + phosphate + H(+). Its pathway is cell wall biogenesis; peptidoglycan biosynthesis. Its function is as follows. Cell wall formation. Catalyzes the addition of glutamate to the nucleotide precursor UDP-N-acetylmuramoyl-L-alanine (UMA). The polypeptide is UDP-N-acetylmuramoylalanine--D-glutamate ligase (Myxococcus xanthus (strain DK1622)).